Consider the following 403-residue polypeptide: G2/mitotic-specific cyclin-B1 (403 aa).

This sequence belongs to the cyclin family. Cyclin AB subfamily. In terms of assembly, interacts with the CDC2 protein kinase to form a serine/threonine kinase holoenzyme complex also known as maturation promoting factor (MPF). The cyclin subunit imparts substrate specificity to the complex.

In terms of biological role, essential for the control of the cell cycle at the G2/M (mitosis) transition. The protein is G2/mitotic-specific cyclin-B1 (ccnb1) of Anguilla japonica (Japanese eel).